The following is a 72-amino-acid chain: Probable protein transport protein Sec61 subunit gamma (72 aa).

Over 1-40 the chain is Cytoplasmic; sequence MSQKLQKPSFLSEYLRSIRLFSKKCVRPSGKELSMSIKRH. Residues 41–61 traverse the membrane as a helical segment; sequence AIGIGFLGILGYAIKLIHIPI. The Extracellular segment spans residues 62 to 72; that stretch reads NNIIVSSPGKE.

This sequence belongs to the SecE/SEC61-gamma family. Heterotrimeric complex composed of SEC61-alpha, SEC61-beta and SEC61-gamma.

It is found in the endoplasmic reticulum membrane. Its function is as follows. Necessary for protein translocation in the endoplasmic reticulum. This Encephalitozoon cuniculi (strain GB-M1) (Microsporidian parasite) protein is Probable protein transport protein Sec61 subunit gamma.